A 279-amino-acid chain; its full sequence is NADPH-dependent 7-cyano-7-deazaguanine reductase (279 aa).

Substrate is bound at residue 86–88 (IES). An NADPH-binding site is contributed by 88 to 89 (SK). The Thioimide intermediate role is filled by Cys-187. The active-site Proton donor is the Asp-194. 226 to 227 (HE) contacts substrate. 255–256 (RG) provides a ligand contact to NADPH.

This sequence belongs to the GTP cyclohydrolase I family. QueF type 2 subfamily. Homodimer.

It is found in the cytoplasm. The catalysed reaction is 7-aminomethyl-7-carbaguanine + 2 NADP(+) = 7-cyano-7-deazaguanine + 2 NADPH + 3 H(+). The protein operates within tRNA modification; tRNA-queuosine biosynthesis. Catalyzes the NADPH-dependent reduction of 7-cyano-7-deazaguanine (preQ0) to 7-aminomethyl-7-deazaguanine (preQ1). This Haemophilus influenzae (strain ATCC 51907 / DSM 11121 / KW20 / Rd) protein is NADPH-dependent 7-cyano-7-deazaguanine reductase.